We begin with the raw amino-acid sequence, 186 residues long: Elongation factor P (186 aa).

The protein belongs to the elongation factor P family.

It is found in the cytoplasm. Its pathway is protein biosynthesis; polypeptide chain elongation. Its function is as follows. Involved in peptide bond synthesis. Stimulates efficient translation and peptide-bond synthesis on native or reconstituted 70S ribosomes in vitro. Probably functions indirectly by altering the affinity of the ribosome for aminoacyl-tRNA, thus increasing their reactivity as acceptors for peptidyl transferase. The sequence is that of Elongation factor P from Streptococcus thermophilus (strain CNRZ 1066).